The following is a 434-amino-acid chain: N-acylneuraminate cytidylyltransferase (434 aa).

An N-acetylmethionine modification is found at methionine 1. The interval 1–42 is disordered; it reads MDSVEKGAATSVSNPRGRPSRGRPPKLQRNSRGGQGRGVEKP. The BC1 motif signature appears at 15-31; that stretch reads PRGRPSRGRPPKLQRNS. Residues arginine 37 and arginine 52 each carry the omega-N-methylarginine modification. Substrate contacts are provided by arginine 52, asparagine 62, arginine 111, serine 120, serine 122, and glutamine 143. The BC2 motif motif lies at 200-206; sequence KRPRRQD. The active site involves arginine 201. Positions 269–276 match the BC3 motif motif; the sequence is KEKLKEIK.

It belongs to the CMP-NeuNAc synthase family. As to quaternary structure, homotetramer; the active enzyme is formed by a dimer of dimers.

The protein localises to the nucleus. It catalyses the reaction an N-acylneuraminate + CTP = a CMP-N-acyl-beta-neuraminate + diphosphate. It participates in amino-sugar metabolism; N-acetylneuraminate metabolism. Functionally, catalyzes the activation of N-acetylneuraminic acid (NeuNAc) to cytidine 5'-monophosphate N-acetylneuraminic acid (CMP-NeuNAc), a substrate required for the addition of sialic acid. Has some activity toward NeuNAc, N-glycolylneuraminic acid (Neu5Gc) or 2-keto-3-deoxy-D-glycero-D-galacto-nononic acid (KDN). The sequence is that of N-acylneuraminate cytidylyltransferase (CMAS) from Bos taurus (Bovine).